The primary structure comprises 1009 residues: Type VII secretion system accessory factor EsaA (1009 aa).

6 consecutive transmembrane segments (helical) span residues 7–27 (IYAL…IFFV), 822–842 (ISPT…AYIF), 869–889 (VITS…VGLI), 903–923 (KFIL…TYLL), 928–948 (SIGM…MNNL), and 979–999 (IGLA…LNMF).

It belongs to the EsaA family. Homodimer. Interacts with EssB.

Its subcellular location is the cell membrane. Its function is as follows. Component of the type VII secretion system (Ess). Provides together with EssB and other components such as EssC and EssE a secretion platform across the cytoplasmic membrane in the host. The sequence is that of Type VII secretion system accessory factor EsaA from Staphylococcus aureus (strain Mu50 / ATCC 700699).